The primary structure comprises 957 residues: Glycine dehydrogenase (decarboxylating) (957 aa).

Lysine 708 carries the N6-(pyridoxal phosphate)lysine modification.

This sequence belongs to the GcvP family. The glycine cleavage system is composed of four proteins: P, T, L and H. Pyridoxal 5'-phosphate serves as cofactor.

It carries out the reaction N(6)-[(R)-lipoyl]-L-lysyl-[glycine-cleavage complex H protein] + glycine + H(+) = N(6)-[(R)-S(8)-aminomethyldihydrolipoyl]-L-lysyl-[glycine-cleavage complex H protein] + CO2. Functionally, the glycine cleavage system catalyzes the degradation of glycine. The P protein binds the alpha-amino group of glycine through its pyridoxal phosphate cofactor; CO(2) is released and the remaining methylamine moiety is then transferred to the lipoamide cofactor of the H protein. This Escherichia coli (strain ATCC 8739 / DSM 1576 / NBRC 3972 / NCIMB 8545 / WDCM 00012 / Crooks) protein is Glycine dehydrogenase (decarboxylating).